Here is a 382-residue protein sequence, read N- to C-terminus: uncharacterized protein (382 aa).

12 helical membrane-spanning segments follow: residues Gly14 to Ala34, Val45 to Ile65, Phe79 to Ala99, Phe102 to Ser122, Leu131 to Ser151, Leu157 to Phe177, Leu204 to Pro224, Ala235 to Ile255, Val270 to Pro290, Ala291 to Cys311, Ala325 to Met345, and Phe348 to Leu368.

Belongs to the major facilitator superfamily. YcaD (TC 2.A.1.26) family.

It is found in the cell inner membrane. This is an uncharacterized protein from Escherichia coli O45:K1 (strain S88 / ExPEC).